We begin with the raw amino-acid sequence, 180 residues long: Shikimate kinase (180 aa).

19 to 24 (GAGKTT) provides a ligand contact to ATP. Residue T23 coordinates Mg(2+). Residues D41, R65, and G87 each coordinate substrate. Position 125 (R125) interacts with ATP. R144 lines the substrate pocket.

Belongs to the shikimate kinase family. Monomer. Mg(2+) serves as cofactor.

It localises to the cytoplasm. The enzyme catalyses shikimate + ATP = 3-phosphoshikimate + ADP + H(+). It functions in the pathway metabolic intermediate biosynthesis; chorismate biosynthesis; chorismate from D-erythrose 4-phosphate and phosphoenolpyruvate: step 5/7. Catalyzes the specific phosphorylation of the 3-hydroxyl group of shikimic acid using ATP as a cosubstrate. The sequence is that of Shikimate kinase from Acinetobacter baumannii (strain SDF).